We begin with the raw amino-acid sequence, 194 residues long: Large ribosomal subunit protein eL15 (194 aa).

A disordered region spans residues 160 to 194 (RGLTSAGKKGRGLMYKGKGTEKVRPSVRANSKKAK).

The protein belongs to the eukaryotic ribosomal protein eL15 family.

This chain is Large ribosomal subunit protein eL15, found in Methanococcus maripaludis (strain C7 / ATCC BAA-1331).